Consider the following 938-residue polypeptide: Isoleucine--tRNA ligase (938 aa).

The 'HIGH' region motif lies at 58–68 (PYANGNIHMGH). Residue E566 coordinates L-isoleucyl-5'-AMP. Positions 607–611 (KMSKS) match the 'KMSKS' region motif. K610 contacts ATP. Residues C906, C909, C926, and C929 each contribute to the Zn(2+) site.

It belongs to the class-I aminoacyl-tRNA synthetase family. IleS type 1 subfamily. Monomer. Requires Zn(2+) as cofactor.

The protein localises to the cytoplasm. The catalysed reaction is tRNA(Ile) + L-isoleucine + ATP = L-isoleucyl-tRNA(Ile) + AMP + diphosphate. Its function is as follows. Catalyzes the attachment of isoleucine to tRNA(Ile). As IleRS can inadvertently accommodate and process structurally similar amino acids such as valine, to avoid such errors it has two additional distinct tRNA(Ile)-dependent editing activities. One activity is designated as 'pretransfer' editing and involves the hydrolysis of activated Val-AMP. The other activity is designated 'posttransfer' editing and involves deacylation of mischarged Val-tRNA(Ile). The chain is Isoleucine--tRNA ligase from Nitratidesulfovibrio vulgaris (strain ATCC 29579 / DSM 644 / CCUG 34227 / NCIMB 8303 / VKM B-1760 / Hildenborough) (Desulfovibrio vulgaris).